A 927-amino-acid chain; its full sequence is UPF0182 protein bll7333 (927 aa).

7 consecutive transmembrane segments (helical) span residues 17–37 (AVVG…LLAL), 65–85 (AVVF…NGWL), 134–154 (LALL…QFVY), 185–205 (WMML…LVHG), 220–240 (VIAH…WSFG), 264–284 (VGLP…LAAW), and 297–317 (AAFL…PVLF).

This sequence belongs to the UPF0182 family.

It localises to the cell membrane. This chain is UPF0182 protein bll7333, found in Bradyrhizobium diazoefficiens (strain JCM 10833 / BCRC 13528 / IAM 13628 / NBRC 14792 / USDA 110).